We begin with the raw amino-acid sequence, 729 residues long: Fatty acid oxidation complex subunit alpha (729 aa).

An enoyl-CoA hydratase/isomerase region spans residues 1-189; it reads MLYKGDTLYL…KIGLVDGVVK (189 aa). Aspartate 296 is a substrate binding site. Positions 311 to 729 are 3-hydroxyacyl-CoA dehydrogenase; that stretch reads ETPKQAAVLG…ARPVGDLKTA (419 aa). Residues methionine 324, aspartate 343, 400–402, lysine 407, and serine 429 contribute to the NAD(+) site; that span reads VVE. The For 3-hydroxyacyl-CoA dehydrogenase activity role is filled by histidine 450. Asparagine 453 is a binding site for NAD(+). Substrate-binding residues include asparagine 500 and tyrosine 660. Positions 708-729 are disordered; the sequence is RHNEPYYPPVEPARPVGDLKTA.

The protein in the N-terminal section; belongs to the enoyl-CoA hydratase/isomerase family. It in the C-terminal section; belongs to the 3-hydroxyacyl-CoA dehydrogenase family. Heterotetramer of two alpha chains (FadB) and two beta chains (FadA).

It carries out the reaction a (3S)-3-hydroxyacyl-CoA + NAD(+) = a 3-oxoacyl-CoA + NADH + H(+). The catalysed reaction is a (3S)-3-hydroxyacyl-CoA = a (2E)-enoyl-CoA + H2O. The enzyme catalyses a 4-saturated-(3S)-3-hydroxyacyl-CoA = a (3E)-enoyl-CoA + H2O. It catalyses the reaction (3S)-3-hydroxybutanoyl-CoA = (3R)-3-hydroxybutanoyl-CoA. It carries out the reaction a (3Z)-enoyl-CoA = a 4-saturated (2E)-enoyl-CoA. The catalysed reaction is a (3E)-enoyl-CoA = a 4-saturated (2E)-enoyl-CoA. Its pathway is lipid metabolism; fatty acid beta-oxidation. Its function is as follows. Involved in the aerobic and anaerobic degradation of long-chain fatty acids via beta-oxidation cycle. Catalyzes the formation of 3-oxoacyl-CoA from enoyl-CoA via L-3-hydroxyacyl-CoA. It can also use D-3-hydroxyacyl-CoA and cis-3-enoyl-CoA as substrate. In Escherichia coli O139:H28 (strain E24377A / ETEC), this protein is Fatty acid oxidation complex subunit alpha.